The sequence spans 158 residues: 3-hydroxyacyl-[acyl-carrier-protein] dehydratase FabZ (158 aa).

Residue histidine 57 is part of the active site.

The protein belongs to the thioester dehydratase family. FabZ subfamily.

It localises to the cytoplasm. The catalysed reaction is a (3R)-hydroxyacyl-[ACP] = a (2E)-enoyl-[ACP] + H2O. Involved in unsaturated fatty acids biosynthesis. Catalyzes the dehydration of short chain beta-hydroxyacyl-ACPs and long chain saturated and unsaturated beta-hydroxyacyl-ACPs. This Helicobacter acinonychis (strain Sheeba) protein is 3-hydroxyacyl-[acyl-carrier-protein] dehydratase FabZ.